Consider the following 84-residue polypeptide: Sulfur carrier protein TusA (84 aa).

The active-site Cysteine persulfide intermediate is the Cys-19.

The protein belongs to the sulfur carrier protein TusA family. In terms of assembly, interacts with IscS.

Its subcellular location is the cytoplasm. The protein operates within tRNA modification. In terms of biological role, sulfur carrier protein involved in sulfur trafficking in the cell. Part of a sulfur-relay system required for 2-thiolation during synthesis of 2-thiouridine of the modified wobble base 5-methylaminomethyl-2-thiouridine (mnm(5)s(2)U) in tRNA. Interacts with IscS and stimulates its cysteine desulfurase activity. Accepts an activated sulfur from IscS, which is then transferred to TusD, and thus determines the direction of sulfur flow from IscS to 2-thiouridine formation. Also appears to be involved in sulfur transfer for the biosynthesis of molybdopterin. This Photorhabdus laumondii subsp. laumondii (strain DSM 15139 / CIP 105565 / TT01) (Photorhabdus luminescens subsp. laumondii) protein is Sulfur carrier protein TusA.